Reading from the N-terminus, the 198-residue chain is V-type proton ATPase subunit E (198 aa).

This sequence belongs to the V-ATPase E subunit family.

Produces ATP from ADP in the presence of a proton gradient across the membrane. This is V-type proton ATPase subunit E from Borrelia hermsii (strain HS1 / DAH).